An 876-amino-acid chain; its full sequence is Valine--tRNA ligase (876 aa).

Positions 44 to 54 (PNVTGKLHLGH) match the 'HIGH' region motif. The 'KMSKS' region motif lies at 520-524 (KMSKS). Residue Lys523 coordinates ATP. A coiled-coil region spans residues 805 to 876 (LEGLIDMDKE…VKARIEQLKA (72 aa)).

It belongs to the class-I aminoacyl-tRNA synthetase family. ValS type 1 subfamily. As to quaternary structure, monomer.

It localises to the cytoplasm. It carries out the reaction tRNA(Val) + L-valine + ATP = L-valyl-tRNA(Val) + AMP + diphosphate. In terms of biological role, catalyzes the attachment of valine to tRNA(Val). As ValRS can inadvertently accommodate and process structurally similar amino acids such as threonine, to avoid such errors, it has a 'posttransfer' editing activity that hydrolyzes mischarged Thr-tRNA(Val) in a tRNA-dependent manner. The chain is Valine--tRNA ligase from Staphylococcus aureus (strain JH1).